Here is a 692-residue protein sequence, read N- to C-terminus: Methionine--tRNA ligase (692 aa).

The 'HIGH' region motif lies at 12-22; it reads PYANGPLHLGH. Zn(2+) contacts are provided by Cys-143, Cys-146, Cys-156, and Cys-159. The short motif at 330–334 is the 'KMSKS' region element; it reads KMSKS. Residue Lys-333 participates in ATP binding. Residues 554–563 show a composition bias toward low complexity; sequence AAAAPAAKPA. The segment at 554–575 is disordered; the sequence is AAAAPAAKPAAPAPAPAPAKDE. A tRNA-binding domain is found at 589–692; sequence DFAKLDLRIG…SGAQPGMPVR (104 aa).

Belongs to the class-I aminoacyl-tRNA synthetase family. MetG type 1 subfamily. In terms of assembly, homodimer. Zn(2+) is required as a cofactor.

It localises to the cytoplasm. The catalysed reaction is tRNA(Met) + L-methionine + ATP = L-methionyl-tRNA(Met) + AMP + diphosphate. Functionally, is required not only for elongation of protein synthesis but also for the initiation of all mRNA translation through initiator tRNA(fMet) aminoacylation. The chain is Methionine--tRNA ligase from Stenotrophomonas maltophilia (strain K279a).